The chain runs to 106 residues: uncharacterized protein (106 aa).

The protein resides in the mitochondrion. This is an uncharacterized protein from Arabidopsis thaliana (Mouse-ear cress).